We begin with the raw amino-acid sequence, 270 residues long: tRNA pseudouridine synthase A (270 aa).

The active-site Nucleophile is Asp-54. Tyr-112 contacts substrate.

The protein belongs to the tRNA pseudouridine synthase TruA family. Homodimer.

It carries out the reaction uridine(38/39/40) in tRNA = pseudouridine(38/39/40) in tRNA. Functionally, formation of pseudouridine at positions 38, 39 and 40 in the anticodon stem and loop of transfer RNAs. The polypeptide is tRNA pseudouridine synthase A (Bordetella bronchiseptica (strain ATCC BAA-588 / NCTC 13252 / RB50) (Alcaligenes bronchisepticus)).